We begin with the raw amino-acid sequence, 145 residues long: Secreted RxLR effector protein 43 (145 aa).

The signal sequence occupies residues 1 to 20 (MKVTMALAALCVALQAPCIG). The RxLR signature appears at 31-34 (RHLR).

It belongs to the RxLR effector family.

The protein localises to the secreted. Its subcellular location is the host nucleus. The protein resides in the host cytoplasm. Secreted effector that completely suppresses the host cell death induced by cell death-inducing proteins. The protein is Secreted RxLR effector protein 43 of Plasmopara viticola (Downy mildew of grapevine).